The following is a 512-amino-acid chain: GMP synthase [glutamine-hydrolyzing] (512 aa).

Positions 7-197 (TIIVLDFGSQ…VFGVCGCSEG (191 aa)) constitute a Glutamine amidotransferase type-1 domain. The active-site Nucleophile is Cys-84. Catalysis depends on residues His-171 and Glu-173. Residues 198 to 387 (WNMENFIEVE…LGIPDEIVWR (190 aa)) form the GMPS ATP-PPase domain. 225–231 (SGGVDSS) contacts ATP.

As to quaternary structure, homodimer.

It catalyses the reaction XMP + L-glutamine + ATP + H2O = GMP + L-glutamate + AMP + diphosphate + 2 H(+). The protein operates within purine metabolism; GMP biosynthesis; GMP from XMP (L-Gln route): step 1/1. Its function is as follows. Catalyzes the synthesis of GMP from XMP. The polypeptide is GMP synthase [glutamine-hydrolyzing] (Bacillus cereus (strain G9842)).